Here is a 416-residue protein sequence, read N- to C-terminus: Putative cell agglutination protein SPAC1348.08c (416 aa).

Positions methionine 1–alanine 27 are cleaved as a signal peptide. N-linked (GlcNAc...) asparagine glycosylation is present at asparagine 19. Tandem repeats lie at residues glycine 90–alanine 124 and glycine 125–asparagine 160. The 2 X 36 AA approximate tandem repeats stretch occupies residues glycine 90–asparagine 160. In terms of domain architecture, PA14 spans phenylalanine 224–tyrosine 390. An N-linked (GlcNAc...) asparagine glycan is attached at asparagine 344.

The protein localises to the cell surface. Functionally, may be involved in agglutination during conjugation or other aspects of colony formation. The polypeptide is Putative cell agglutination protein SPAC1348.08c (Schizosaccharomyces pombe (strain 972 / ATCC 24843) (Fission yeast)).